The primary structure comprises 163 residues: Phosphopantetheine adenylyltransferase (163 aa).

Serine 11 is a substrate binding site. ATP contacts are provided by residues 11–12 (SF) and histidine 19. Substrate-binding residues include lysine 43, leucine 75, and arginine 89. ATP-binding positions include 90–92 (GLR), glutamate 100, and 125–131 (FGYLSSS).

The protein belongs to the bacterial CoaD family. In terms of assembly, homohexamer. The cofactor is Mg(2+).

The protein resides in the cytoplasm. It catalyses the reaction (R)-4'-phosphopantetheine + ATP + H(+) = 3'-dephospho-CoA + diphosphate. It functions in the pathway cofactor biosynthesis; coenzyme A biosynthesis; CoA from (R)-pantothenate: step 4/5. Functionally, reversibly transfers an adenylyl group from ATP to 4'-phosphopantetheine, yielding dephospho-CoA (dPCoA) and pyrophosphate. The sequence is that of Phosphopantetheine adenylyltransferase from Geobacter metallireducens (strain ATCC 53774 / DSM 7210 / GS-15).